A 335-amino-acid chain; its full sequence is 3-hydroxyproline 2-epimerase (335 aa).

C91 functions as the Proton acceptor in the catalytic mechanism. Residues 92–93 (GH), D251, and 256–257 (GS) contribute to the substrate site.

It belongs to the proline racemase family.

The enzyme catalyses trans-3-hydroxy-L-proline = cis-3-hydroxy-D-proline. It catalyses the reaction trans-4-hydroxy-L-proline = cis-4-hydroxy-D-proline. Functionally, catalyzes the epimerization of trans-3-hydroxy-L-proline (t3LHyp) to cis-3-hydroxy-D-proline (c3DHyp) in vitro. Can also catalyze the epimerization of trans-4-hydroxy-L-proline (t3LHyp) to cis-4-hydroxy-D-proline (c4DHyp), albeit with 3.6-fold lower efficiency. Displays no proline racemase activity. The protein is 3-hydroxyproline 2-epimerase of Burkholderia multivorans (strain ATCC 17616 / 249).